Here is a 243-residue protein sequence, read N- to C-terminus: Leucyl/phenylalanyl-tRNA--protein transferase (243 aa).

This sequence belongs to the L/F-transferase family.

Its subcellular location is the cytoplasm. The catalysed reaction is N-terminal L-lysyl-[protein] + L-leucyl-tRNA(Leu) = N-terminal L-leucyl-L-lysyl-[protein] + tRNA(Leu) + H(+). It carries out the reaction N-terminal L-arginyl-[protein] + L-leucyl-tRNA(Leu) = N-terminal L-leucyl-L-arginyl-[protein] + tRNA(Leu) + H(+). The enzyme catalyses L-phenylalanyl-tRNA(Phe) + an N-terminal L-alpha-aminoacyl-[protein] = an N-terminal L-phenylalanyl-L-alpha-aminoacyl-[protein] + tRNA(Phe). Functions in the N-end rule pathway of protein degradation where it conjugates Leu, Phe and, less efficiently, Met from aminoacyl-tRNAs to the N-termini of proteins containing an N-terminal arginine or lysine. The sequence is that of Leucyl/phenylalanyl-tRNA--protein transferase from Vibrio cholerae serotype O1 (strain ATCC 39315 / El Tor Inaba N16961).